A 348-amino-acid chain; its full sequence is A-type ATP synthase subunit C (348 aa).

Belongs to the V-ATPase V0D/AC39 subunit family. Has multiple subunits with at least A(3), B(3), C, D, E, F, H, I and proteolipid K(x).

It localises to the cell membrane. Its function is as follows. Component of the A-type ATP synthase that produces ATP from ADP in the presence of a proton gradient across the membrane. The polypeptide is A-type ATP synthase subunit C (Halorubrum lacusprofundi (strain ATCC 49239 / DSM 5036 / JCM 8891 / ACAM 34)).